The following is a 472-amino-acid chain: Transcription factor TGAL1 (472 aa).

Residues tryptophan 136–arginine 190 form a disordered region. The segment covering aspartate 143–aspartate 153 has biased composition (low complexity). The span at serine 176–lysine 187 shows a compositional bias: basic and acidic residues. Positions aspartate 185–arginine 229 constitute a bZIP domain. The interval lysine 187–lysine 207 is basic motif. The segment at leucine 213–leucine 227 is leucine-zipper. The region spanning alanine 252–arginine 469 is the DOG1 domain.

It belongs to the bZIP family. Isoforms 1 and 2 interact with NPR2/NH2. Isoform 2 interacts with NPR1/NH1 and NPR3/NH3.

It is found in the nucleus. Functionally, transcriptional regulator involved in defense response. The sequence is that of Transcription factor TGAL1 from Oryza sativa subsp. japonica (Rice).